Here is an 868-residue protein sequence, read N- to C-terminus: Pro-neuregulin-2, membrane-bound isoform (868 aa).

The tract at residues 1–114 (MRQVCCSALP…AAGGMRRDPA (114 aa)) is disordered. Positions 1 to 127 (MRQVCCSALP…SMLLFGVSLA (127 aa)) are excised as a propeptide. Low complexity predominate over residues 19–75 (SSYSYSDSSSSSSSNNSSSSTSSRSSSRSSSRSSRGSTTTTSSSENSGSNSGSIFRP). 2 N-linked (GlcNAc...) asparagine glycosylation sites follow: N33 and N34. Residues 76–90 (AAPPEPRPQPQPQPR) are compositionally biased toward pro residues. Residues 91–108 (SPAARRAAARSRAAAAGG) are compositionally biased toward low complexity. At 128–429 (CYSPSLKSVQ…KEAEELYQKR (302 aa)) the chain is on the extracellular side. Residues N163, N294, and N362 are each glycosylated (N-linked (GlcNAc...) asparagine). The Ig-like C2-type domain maps to 253-348 (PKLKKMKSQT…RGRLHVNSVS (96 aa)). Intrachain disulfides connect C273-C327, C361-C375, C369-C386, and C388-C397. Positions 357–398 (HARKCNETAKSYCVNGGVCYYIEGINQLSCKCPNGFFGQRCL) constitute an EGF-like domain. The helical transmembrane segment at 430-450 (VLTITGICVALLVVGIVCVVA) threads the bilayer. The Cytoplasmic segment spans residues 451-868 (YCKTKKQRRQ…TRAKQDSGPL (418 aa)). 5 disordered regions span residues 469–488 (MCPA…PRLD), 516–553 (TFSG…SESL), 671–690 (LLRH…DMQR), 720–806 (ASPF…DGAL), and 823–868 (LRSD…SGPL). Residues 518–530 (SGSHSCSPSHHCS) are compositionally biased toward low complexity. Residues 538 to 551 (HRHESHTWSLERSE) are compositionally biased toward basic and acidic residues. Over residues 766–794 (LNGLAAQRARAARDSLSLSSGSGCGSASA) the composition is skewed to low complexity.

It belongs to the neuregulin family. In terms of assembly, interacts with ERBB3 and ERBB4. In terms of processing, proteolytic cleavage close to the plasma membrane on the external face leads to the release of the soluble growth factor form. Extensive glycosylation precedes the proteolytic cleavage. In terms of tissue distribution, expressed in most parts of the brain, especially the olfactory bulb and cerebellum where it localizes in granule and Purkinje cells. In the hippocampus, found in the granule cells of the dentate gyrus. In the basal forebrain, found in the cholinergic cells. In the hindbrain, weakly detectable in the motor trigeminal nucleus. Not detected in the hypothalamus. Also found in the liver and in the thymus. Not detected in heart, adrenal gland, or testis.

The protein localises to the cell membrane. It is found in the secreted. Direct ligand for ERBB3 and ERBB4 tyrosine kinase receptors. Concomitantly recruits ERBB1 and ERBB2 coreceptors, resulting in ligand-stimulated tyrosine phosphorylation and activation of the ERBB receptors. May also promote the heterodimerization with the EGF receptor. The polypeptide is Pro-neuregulin-2, membrane-bound isoform (Nrg2) (Rattus norvegicus (Rat)).